Reading from the N-terminus, the 532-residue chain is Flavin-containing monooxygenase 1 (532 aa).

A2 carries the N-acetylalanine modification. Residues 2–510 (AKRVAIVGAG…ARVVQESPSP (509 aa)) lie on the Lumenal side of the membrane. Residues 9-13 (GAGVS), E32, 40-41 (LW), and 61-62 (NS) contribute to the FAD site. NADP(+) contacts are provided by residues 60-61 (SN) and 195-198 (SGTD). A helical transmembrane segment spans residues 511–531 (FESFLKVFSFLALLVAIFLIF). L532 is a topological domain (cytoplasmic).

This sequence belongs to the FMO family. The cofactor is FAD. In terms of tissue distribution, expressed mainly in fetal and adult liver.

Its subcellular location is the endoplasmic reticulum membrane. It catalyses the reaction hypotaurine + NADPH + O2 + H(+) = taurine + NADP(+) + H2O. The enzyme catalyses hypotaurine + NADH + O2 + H(+) = taurine + NAD(+) + H2O. It carries out the reaction trimethylamine + NADPH + O2 = trimethylamine N-oxide + NADP(+) + H2O. The catalysed reaction is N,N-dimethylaniline + NADPH + O2 + H(+) = N,N-dimethylaniline N-oxide + NADP(+) + H2O. Its function is as follows. Broad spectrum monooxygenase that catalyzes the oxygenation of a wide variety of nitrogen- and sulfur-containing compounds including xenobiotics. Catalyzes the S-oxygenation of hypotaurine to produce taurine, an organic osmolyte involved in cell volume regulation as well as a variety of cytoprotective and developmental processes. In vitro, catalyzes the N-oxygenation of trimethylamine (TMA) to produce trimethylamine N-oxide (TMAO) and could therefore participate to the detoxification of this compound that is generated by the action of gut microbiota from dietary precursors such as choline, choline containing compounds, betaine or L-carnitine. The protein is Flavin-containing monooxygenase 1 of Homo sapiens (Human).